A 388-amino-acid chain; its full sequence is Omega-hydroxy-beta-dihydromenaquinone-9 sulfotransferase Stf3 (388 aa).

The protein belongs to the Stf3 family.

It catalyses the reaction omega-hydroxy-beta-dihydromenaquinone-9 + 3'-phosphoadenylyl sulfate = omega-sulfo-beta-dihydromenaquinone-9 + adenosine 3',5'-bisphosphate + H(+). Involved in the biosynthesis of sulfomenaquinone (SMK, initially named S881 on the basis of its mass), which is localized in the outer envelope of M.bovis and negatively regulates its virulence. Catalyzes the transfer of a sulfonate group from 3'-phosphoadenosine-5'-phosphosulfate (PAPS) to omega-hydroxy-beta-dihydromenaquinone-9, generating omega-sulfo-beta-dihydromenaquinone-9 (sulfomenaquinone). The sequence is that of Omega-hydroxy-beta-dihydromenaquinone-9 sulfotransferase Stf3 from Mycobacterium bovis (strain ATCC BAA-935 / AF2122/97).